A 192-amino-acid chain; its full sequence is uncharacterized protein (192 aa).

A Nudix hydrolase domain is found at 29–160 (HRQAAVLIPI…PLDIYRRGDS (132 aa)). Positions 67–89 (GAVDDTDTSVIAAALREAEEEVA) match the Nudix box motif. Positions 83 and 87 each coordinate Mg(2+).

Belongs to the Nudix hydrolase family. PCD1 subfamily. Mn(2+) is required as a cofactor. It depends on Mg(2+) as a cofactor.

Probably mediates the hydrolysis of some nucleoside diphosphate derivatives. This is an uncharacterized protein from Escherichia coli O6:H1 (strain CFT073 / ATCC 700928 / UPEC).